The primary structure comprises 246 residues: Probable transcriptional regulatory protein HAPS_0943 (246 aa).

It belongs to the TACO1 family.

The protein resides in the cytoplasm. This is Probable transcriptional regulatory protein HAPS_0943 from Glaesserella parasuis serovar 5 (strain SH0165) (Haemophilus parasuis).